Consider the following 933-residue polypeptide: Thyroid peroxidase (933 aa).

An N-terminal signal peptide occupies residues Met-1–Ala-18. The Extracellular segment spans residues Phe-19–Arg-846. A glycan (N-linked (GlcNAc...) asparagine) is linked at Asn-129. Residues Cys-142 and Cys-158 are joined by a disulfide bond. Position 238 (Asp-238) interacts with heme b. His-239 acts as the Proton acceptor in catalysis. Ca(2+) is bound at residue Asp-240. Intrachain disulfides connect Cys-259-Cys-269 and Cys-263-Cys-286. Asn-307 is a glycosylation site (N-linked (GlcNAc...) asparagine). Ca(2+) is bound by residues Thr-321, Phe-323, Asp-325, and Ser-327. N-linked (GlcNAc...) asparagine glycosylation occurs at Asn-342. Residues Glu-399 and His-494 each coordinate heme b. N-linked (GlcNAc...) asparagine glycosylation is present at Asn-569. 2 disulfide bridges follow: Cys-598–Cys-655 and Cys-696–Cys-721. The Sushi domain occupies Asp-740 to Lys-795. The 44-residue stretch at Asp-796–Val-839 folds into the EGF-like; calcium-binding domain. 3 disulfides stabilise this stretch: Cys-800–Cys-814, Cys-808–Cys-823, and Cys-825–Cys-838. Residues Val-847–Cys-871 traverse the membrane as a helical segment. Over Arg-872 to Leu-933 the chain is Cytoplasmic. Residues Thr-881–Leu-933 form a disordered region. Positions Glu-922–Leu-933 are enriched in basic and acidic residues.

Belongs to the peroxidase family. XPO subfamily. Interacts with DUOX1, DUOX2 and CYBA. Requires Ca(2+) as cofactor. The cofactor is heme b. Post-translationally, glycosylated. In terms of processing, heme is covalently bound through a H(2)O(2)-dependent autocatalytic process. Heme insertion is important for the delivery of protein at the cell surface. Cleaved in its N-terminal part.

The protein resides in the membrane. It localises to the cell surface. It carries out the reaction 2 iodide + H2O2 + 2 H(+) = diiodine + 2 H2O. The catalysed reaction is [thyroglobulin]-L-tyrosine + iodide + H2O2 + H(+) = [thyroglobulin]-3-iodo-L-tyrosine + 2 H2O. It catalyses the reaction [thyroglobulin]-3-iodo-L-tyrosine + iodide + H2O2 + H(+) = [thyroglobulin]-3,5-diiodo-L-tyrosine + 2 H2O. The enzyme catalyses 2 [thyroglobulin]-3,5-diiodo-L-tyrosine + H2O2 = [thyroglobulin]-L-thyroxine + [thyroglobulin]-dehydroalanine + 2 H2O. It carries out the reaction [thyroglobulin]-3-iodo-L-tyrosine + [thyroglobulin]-3,5-diiodo-L-tyrosine + H2O2 = [thyroglobulin]-3,3',5-triiodo-L-thyronine + [thyroglobulin]-dehydroalanine + 2 H2O. It functions in the pathway hormone biosynthesis; thyroid hormone biosynthesis. Its function is as follows. Iodination and coupling of the hormonogenic tyrosines in thyroglobulin to yield the thyroid hormones T(3) and T(4). This is Thyroid peroxidase from Homo sapiens (Human).